Reading from the N-terminus, the 276-residue chain is Diaminopimelate epimerase (276 aa).

The substrate site is built by N13, Q46, and N66. C75 acts as the Proton donor in catalysis. Substrate is bound by residues 76 to 77 (GN), N159, N192, and 210 to 211 (ER). The active-site Proton acceptor is the C219. 220–221 (GT) lines the substrate pocket.

It belongs to the diaminopimelate epimerase family. In terms of assembly, homodimer.

It is found in the cytoplasm. The catalysed reaction is (2S,6S)-2,6-diaminopimelate = meso-2,6-diaminopimelate. The protein operates within amino-acid biosynthesis; L-lysine biosynthesis via DAP pathway; DL-2,6-diaminopimelate from LL-2,6-diaminopimelate: step 1/1. In terms of biological role, catalyzes the stereoinversion of LL-2,6-diaminopimelate (L,L-DAP) to meso-diaminopimelate (meso-DAP), a precursor of L-lysine and an essential component of the bacterial peptidoglycan. This chain is Diaminopimelate epimerase, found in Pseudoalteromonas translucida (strain TAC 125).